Here is a 376-residue protein sequence, read N- to C-terminus: dTDP-4-amino-4,6-dideoxygalactose transaminase (376 aa).

Position 181 is an N6-(pyridoxal phosphate)lysine (K181).

The protein belongs to the DegT/DnrJ/EryC1 family. As to quaternary structure, homotetramer. Pyridoxal 5'-phosphate is required as a cofactor.

It catalyses the reaction dTDP-4-amino-4,6-dideoxy-alpha-D-galactose + 2-oxoglutarate = dTDP-4-dehydro-6-deoxy-alpha-D-glucose + L-glutamate. It functions in the pathway bacterial outer membrane biogenesis; enterobacterial common antigen biosynthesis. In terms of biological role, catalyzes the synthesis of dTDP-4-amino-4,6-dideoxy-D-galactose (dTDP-Fuc4N) from dTDP-4-keto-6-deoxy-D-glucose (dTDP-D-Glc4O) and L-glutamate. In Escherichia coli (strain K12), this protein is dTDP-4-amino-4,6-dideoxygalactose transaminase.